The primary structure comprises 210 residues: MECKERRLIGDLIALSYVEGLPVAEAAKRLCVTRQGLYKLLKQLRNEGYVAEGPLIKITQKGRDLLSSVLRDLLRYFNIASIRLIGRVISGLGEGAFYISLEGYRRAIEEKLGFTPFPGTLNIKLDPQYLPYRRYLDGLPGIVIPGFTNGLRTYGGVKAFKAKINGVEGAVVMPERTHHPTDVIEIIAPVKLRDALNLKDGDIVEVEILL.

Positions 1-81 (MECKERRLIG…DLLRYFNIAS (81 aa)) are H-T-H motif-like. Positions 82–210 (IRLIGRVISG…GDIVEVEILL (129 aa)) are riboflavin kinase. Position 91–96 (91–96 (GLGEGA)) interacts with CDP. 2 residues coordinate Mg(2+): threonine 120 and asparagine 122. FMN is bound by residues threonine 177 and glutamate 185. CDP is bound at residue 190-193 (VKLR).

Belongs to the archaeal riboflavin kinase family. The cofactor is Mg(2+).

It carries out the reaction riboflavin + CTP = CDP + FMN + H(+). The protein operates within cofactor biosynthesis; FMN biosynthesis; FMN from riboflavin (CTP route): step 1/1. Functionally, catalyzes the CTP-dependent phosphorylation of riboflavin (vitamin B2) to form flavin mononucleotide (FMN). This Pyrobaculum aerophilum (strain ATCC 51768 / DSM 7523 / JCM 9630 / CIP 104966 / NBRC 100827 / IM2) protein is Riboflavin kinase (ribK).